We begin with the raw amino-acid sequence, 277 residues long: uncharacterized protein (277 aa).

Residues 139-167 form an SWIM-type zinc finger; the sequence is TARELSLDCSCPDYAVPCKHLAATFYLLA.

This is an uncharacterized protein from Mycobacterium tuberculosis (strain ATCC 25618 / H37Rv).